The sequence spans 575 residues: Preprotein translocase subunit SCY2, chloroplastic (575 aa).

Residues M1–C34 constitute a chloroplast transit peptide. Transmembrane regions (helical) follow at residues F157 to F177, L206 to L226, I251 to L271, V285 to T305, I306 to G326, L346 to V366, T414 to L434, G447 to F467, F509 to L529, and S531 to I551.

The protein belongs to the SecY/SEC61-alpha family. Part of a second Sec protein translocation apparatus. Interacts probably with SECA2. In terms of tissue distribution, ubiquitous.

It localises to the plastid. Its subcellular location is the chloroplast membrane. The protein localises to the amyloplast membrane. It is found in the chloroplast thylakoid membrane. Involved in protein export. Probably interacts with other proteins to allow the postimport or conservative sorting pathway for inner membrane proteins in plastids. Central subunit of the protein translocation channel SecYE. Consists of two halves formed by TMs 1-5 and 6-10. These two domains form a lateral gate at the front which open onto the bilayer between TMs 2 and 7, and are clamped together by SecE at the back. The channel is closed by both a pore ring composed of hydrophobic SecY resides and a short helix (helix 2A) on the extracellular side of the membrane which forms a plug. In Arabidopsis thaliana (Mouse-ear cress), this protein is Preprotein translocase subunit SCY2, chloroplastic (SCY2).